We begin with the raw amino-acid sequence, 508 residues long: Pyruvate kinase (508 aa).

Arginine 56 lines the substrate pocket. Asparagine 58, serine 60, aspartate 90, and threonine 91 together coordinate K(+). 58 to 61 (NFSH) serves as a coordination point for ATP. ATP is bound by residues arginine 97 and lysine 185. Glutamate 251 is a Mg(2+) binding site. Substrate contacts are provided by glycine 274, aspartate 275, and threonine 307. A Mg(2+)-binding site is contributed by aspartate 275.

It belongs to the pyruvate kinase family. Homotetramer. Mg(2+) is required as a cofactor. K(+) serves as cofactor.

The enzyme catalyses pyruvate + ATP = phosphoenolpyruvate + ADP + H(+). The protein operates within carbohydrate degradation; glycolysis; pyruvate from D-glyceraldehyde 3-phosphate: step 5/5. Regulated by phosphoenolpyruvate substrate and is allosterically activated by ribose-5-phosphate, AMP and other nucleoside monophosphates but not by fructose-1,6-bisphosphate. The protein is Pyruvate kinase (pyk) of Mycoplasma genitalium (strain ATCC 33530 / DSM 19775 / NCTC 10195 / G37) (Mycoplasmoides genitalium).